A 402-amino-acid polypeptide reads, in one-letter code: uncharacterized protein (402 aa).

Residues 1 to 12 are Cytoplasmic-facing; that stretch reads MFQQLSASIRHN. A helical transmembrane segment spans residues 13–33; it reads AHIIFLCISWYFISSLASQVT. Residues 34–50 lie on the Extracellular side of the membrane; that stretch reads KQVLTVCPLPLFLGEFQ. A helical transmembrane segment spans residues 51–71; sequence FIYTAVLAWFTCYIAYSFPGF. At 72–103 the chain is on the cytoplasmic side; sequence YRIFPNGTFPEYYIDDRETSRAARKESKLSSL. A helical transmembrane segment spans residues 104 to 124; that stretch reads IIPPSKPILQTVLPLGLFQFV. At 125–134 the chain is on the extracellular side; it reads GKYFGHTATS. A helical membrane pass occupies residues 135-155; the sequence is LVPVSTVASIKTLSPMFILLL. Topologically, residues 156–165 are cytoplasmic; the sequence is QKILKISTLK. Residues 166–186 form a helical membrane-spanning segment; it reads ITLTLIFSLCTLVLGVWIIVQ. Topologically, residues 187–206 are extracellular; that stretch reads EDNRSPASSNELREFSKYGV. The chain crosses the membrane as a helical span at residues 207 to 227; it reads ICAMISMFIFVLQNIYGKTVF. The Cytoplasmic portion of the chain corresponds to 228 to 271; that stretch reads TYRSQTDESQSNSGFSRQESPLPLYEKLDEKLVAKKKPKSYDKL. Residues 272-292 traverse the membrane as a helical segment; it reads TLMIYISLVGFCLSFGWFITL. Residues 293 to 353 lie on the Extracellular side of the membrane; that stretch reads EFPVLFRYFF…TYSIANLMKR (61 aa). Residues 354-374 form a helical membrane-spanning segment; that stretch reads FAIIAVSWVFIGRRITWLQVF. At 375–402 the chain is on the cytoplasmic side; the sequence is GLVLNTLGLFLYERCTSQSKIKAKIRPE.

It belongs to the TPT transporter family.

The protein localises to the membrane. This is an uncharacterized protein from Saccharomyces cerevisiae (strain ATCC 204508 / S288c) (Baker's yeast).